A 356-amino-acid chain; its full sequence is NADH-quinone oxidoreductase subunit H (356 aa).

8 consecutive transmembrane segments (helical) span residues 18–38 (IVMV…IAYI), 87–107 (GVFL…WAVI), 120–140 (VGIL…IMAG), 166–186 (IGFV…SAIV), 202–222 (WLTF…VFYV), 265–285 (AITT…LPPI), 292–312 (WVPG…LFAM), and 328–348 (LGWK…AGVL).

This sequence belongs to the complex I subunit 1 family. NDH-1 is composed of 14 different subunits. Subunits NuoA, H, J, K, L, M, N constitute the membrane sector of the complex.

It is found in the cell inner membrane. It carries out the reaction a quinone + NADH + 5 H(+)(in) = a quinol + NAD(+) + 4 H(+)(out). NDH-1 shuttles electrons from NADH, via FMN and iron-sulfur (Fe-S) centers, to quinones in the respiratory chain. The immediate electron acceptor for the enzyme in this species is believed to be ubiquinone. Couples the redox reaction to proton translocation (for every two electrons transferred, four hydrogen ions are translocated across the cytoplasmic membrane), and thus conserves the redox energy in a proton gradient. This subunit may bind ubiquinone. The sequence is that of NADH-quinone oxidoreductase subunit H from Nitrobacter hamburgensis (strain DSM 10229 / NCIMB 13809 / X14).